The primary structure comprises 189 residues: Peptidyl-tRNA hydrolase (189 aa).

Residue tyrosine 15 coordinates tRNA. Histidine 20 (proton acceptor) is an active-site residue. Residues tyrosine 67, asparagine 69, and asparagine 115 each coordinate tRNA.

It belongs to the PTH family. In terms of assembly, monomer.

The protein resides in the cytoplasm. It carries out the reaction an N-acyl-L-alpha-aminoacyl-tRNA + H2O = an N-acyl-L-amino acid + a tRNA + H(+). Its function is as follows. Hydrolyzes ribosome-free peptidyl-tRNAs (with 1 or more amino acids incorporated), which drop off the ribosome during protein synthesis, or as a result of ribosome stalling. Functionally, catalyzes the release of premature peptidyl moieties from peptidyl-tRNA molecules trapped in stalled 50S ribosomal subunits, and thus maintains levels of free tRNAs and 50S ribosomes. In Symbiobacterium thermophilum (strain DSM 24528 / JCM 14929 / IAM 14863 / T), this protein is Peptidyl-tRNA hydrolase.